Reading from the N-terminus, the 670-residue chain is ATP-dependent DNA helicase Rep (670 aa).

The UvrD-like helicase ATP-binding domain maps to 1–277; it reads MLFNEHQKKA…IIMQHNYRSS (277 aa). ATP contacts are provided by residues 22–29 and arginine 275; that span reads AGAGSGKT. Residues 278 to 562 enclose the UvrD-like helicase C-terminal domain; it reads GRILKVANAL…QLMTLHASKG (285 aa).

Belongs to the helicase family. UvrD subfamily. Homodimer.

It carries out the reaction Couples ATP hydrolysis with the unwinding of duplex DNA by translocating in the 3'-5' direction.. The catalysed reaction is ATP + H2O = ADP + phosphate + H(+). In terms of biological role, rep helicase is a single-stranded DNA-dependent ATPase involved in DNA replication; it can initiate unwinding at a nick in the DNA. It binds to the single-stranded DNA and acts in a progressive fashion along the DNA in the 3' to 5' direction. The sequence is that of ATP-dependent DNA helicase Rep from Buchnera aphidicola subsp. Baizongia pistaciae (strain Bp).